The chain runs to 566 residues: Protein pacG (566 aa).

The segment at residues 79 to 326 (TSFDPPPPAE…RSPRNFQSRK (248 aa)) is a DNA-binding region (NDT80). Disordered regions lie at residues 314 to 422 (VRGR…EAHR) and 448 to 470 (DSRP…DSGR). A compositionally biased stretch (low complexity) spans 333–349 (SAAASRKNAQAAAASNN). 3 stretches are compositionally biased toward polar residues: residues 365-391 (VKSS…ATNS), 403-413 (HSSVYSQSSPE), and 452-466 (HTSF…SLSV).

It localises to the nucleus. The protein localises to the cytoplasm. Transcription factor that acts as a positive regulator of nonrepressible acid phosphatase activity. Is a major regulator of responses to nitrogen and carbon starvation and is essential for the expression of genes involved in vegetative incompatibility (like pin-c, het-6, and tol). Vegetative incompatibility is a non-self-recognition system ubiquitous in filamentous fungi which results in programmed cell death. The chain is Protein pacG (pacG) from Emericella nidulans (strain FGSC A4 / ATCC 38163 / CBS 112.46 / NRRL 194 / M139) (Aspergillus nidulans).